Here is a 754-residue protein sequence, read N- to C-terminus: Lysyl oxidase homolog 3 (754 aa).

The first 26 residues, 1 to 26 (MRAVSVWYCCPWGLLLLHCLCSFSVG), serve as a signal peptide directing secretion. SRCR domains lie at 45–146 (FRLA…VICK), 170–283 (VRLR…VSCV), 308–408 (VRLK…VRCN), and 418–526 (IRLS…VICS). 17 disulfide bridges follow: cysteine 71–cysteine 135, cysteine 84–cysteine 145, cysteine 115–cysteine 125, cysteine 202–cysteine 272, cysteine 215–cysteine 282, cysteine 249–cysteine 259, cysteine 333–cysteine 397, cysteine 346–cysteine 407, cysteine 377–cysteine 387, cysteine 447–cysteine 512, cysteine 460–cysteine 525, cysteine 493–cysteine 503, cysteine 555–cysteine 561, cysteine 607–cysteine 655, cysteine 639–cysteine 645, cysteine 667–cysteine 677, and cysteine 714–cysteine 728. Asparagine 112 carries an N-linked (GlcNAc...) asparagine glycan. N-linked (GlcNAc...) asparagine glycosylation is present at asparagine 267. N-linked (GlcNAc...) asparagine glycans are attached at residues asparagine 391 and asparagine 482. The tract at residues 530–733 (SDLLLHSALV…WVHNCHIGDA (204 aa)) is lysyl-oxidase like. The Cu cation site is built by histidine 608, histidine 610, and histidine 612. N-linked (GlcNAc...) asparagine glycosylation is present at asparagine 626. The lysine tyrosylquinone (Lys-Tyr) cross-link spans 635 to 671 (KASFCLEDTECQEDVSKRYECANFGEQGITVGCWDLY). Tyrosine 671 is subject to 2',4',5'-topaquinone.

Belongs to the lysyl oxidase family. Requires Cu cation as cofactor. The cofactor is lysine tyrosylquinone residue. Post-translationally, the lysine tyrosylquinone cross-link (LTQ) is generated by condensation of the epsilon-amino group of a lysine with a topaquinone produced by oxidation of tyrosine. Expressed in palate: predominantly present in the palate mesenchyme and tongue (at protein level). In spine, expressed in the original intervertebral disk, cartilage primordia, anterior and posterior longitudinal ligaments, meninges of spinal cord, lung and heart. In eyes, strongly expressed in the skin of the eyelid and weakly expressed in the cornea and sclera. In lung, predominantly expressed in the pulmonary mesenchyme. In developing muscle, expressed at myofiber ends (at protein level).

The protein resides in the secreted. The protein localises to the extracellular space. It localises to the cytoplasm. It is found in the nucleus. It carries out the reaction L-lysyl-[protein] + O2 + H2O = (S)-2-amino-6-oxohexanoyl-[protein] + H2O2 + NH4(+). The enzyme catalyses N(6)-acetyl-L-lysyl-[protein] + O2 + H2O = acetamide + (S)-2-amino-6-oxohexanoyl-[protein] + H2O2. Its function is as follows. Protein-lysine 6-oxidase that mediates the oxidation of peptidyl lysine residues to allysine in target proteins. Catalyzes the post-translational oxidative deamination of peptidyl lysine residues in precursors of elastin and different types of collagens, a prerequisite in the formation of cross-links between collagens and elastin. Required for somite boundary formation by catalyzing oxidation of fibronectin (FN1), enhancing integrin signaling in myofibers and their adhesion to the myotendinous junction (MTJ). Acts as a regulator of inflammatory response by inhibiting differentiation of naive CD4(+) T-cells into T-helper Th17 or regulatory T-cells (Treg): acts by interacting with STAT3 in the nucleus and catalyzing both deacetylation and oxidation of lysine residues on STAT3, leading to disrupt STAT3 dimerization and inhibit STAT3 transcription activity. Oxidation of lysine residues to allysine on STAT3 preferentially takes place on lysine residues that are acetylated. Also able to catalyze deacetylation of lysine residues on STAT3. The polypeptide is Lysyl oxidase homolog 3 (Mus musculus (Mouse)).